The sequence spans 447 residues: Tubulin beta-4 chain (447 aa).

GTP is bound by residues Gln-11, Glu-69, Ser-138, Gly-142, Thr-143, Gly-144, Asn-204, and Asn-226. Glu-69 is a Mg(2+) binding site. Residues 423–447 (QQYQDATADEEGEYEDEEQQEADDM) are disordered. Residues 429 to 447 (TADEEGEYEDEEQQEADDM) are compositionally biased toward acidic residues.

This sequence belongs to the tubulin family. As to quaternary structure, dimer of alpha and beta chains. A typical microtubule is a hollow water-filled tube with an outer diameter of 25 nm and an inner diameter of 15 nM. Alpha-beta heterodimers associate head-to-tail to form protofilaments running lengthwise along the microtubule wall with the beta-tubulin subunit facing the microtubule plus end conferring a structural polarity. Microtubules usually have 13 protofilaments but different protofilament numbers can be found in some organisms and specialized cells. Mg(2+) serves as cofactor. As to expression, expressed in roots and leaf sheaths.

The protein resides in the cytoplasm. It localises to the cytoskeleton. Its function is as follows. Tubulin is the major constituent of microtubules, a cylinder consisting of laterally associated linear protofilaments composed of alpha- and beta-tubulin heterodimers. Microtubules grow by the addition of GTP-tubulin dimers to the microtubule end, where a stabilizing cap forms. Below the cap, tubulin dimers are in GDP-bound state, owing to GTPase activity of alpha-tubulin. The chain is Tubulin beta-4 chain (TUBB4) from Oryza sativa subsp. japonica (Rice).